The primary structure comprises 373 residues: Cytoplasmic tRNA 2-thiolation protein 1 (373 aa).

This sequence belongs to the TtcA family. CTU1/NCS6/ATPBD3 subfamily.

Its subcellular location is the cytoplasm. The protein operates within tRNA modification; 5-methoxycarbonylmethyl-2-thiouridine-tRNA biosynthesis. Its function is as follows. Plays a central role in 2-thiolation of mcm(5)S(2)U at tRNA wobble positions of tRNA(Lys), tRNA(Glu) and tRNA(Gln). Directly binds tRNAs and probably acts by catalyzing adenylation of tRNAs, an intermediate required for 2-thiolation. It is unclear whether it acts as a sulfurtransferase that transfers sulfur from thiocarboxylated URM1 onto the uridine of tRNAs at wobble position. Prior mcm(5) tRNA modification by the elongator complex is required for 2-thiolation. May also be involved in protein urmylation. This is Cytoplasmic tRNA 2-thiolation protein 1 from Eremothecium gossypii (strain ATCC 10895 / CBS 109.51 / FGSC 9923 / NRRL Y-1056) (Yeast).